The following is a 442-amino-acid chain: Histidinol dehydrogenase (442 aa).

NAD(+) contacts are provided by Y138, Q199, and N222. Positions 245, 267, and 270 each coordinate substrate. Q267 and H270 together coordinate Zn(2+). Catalysis depends on proton acceptor residues E335 and H336. Positions 336, 369, 423, and 428 each coordinate substrate. Zn(2+) is bound at residue D369. H428 provides a ligand contact to Zn(2+).

The protein belongs to the histidinol dehydrogenase family. The cofactor is Zn(2+).

The catalysed reaction is L-histidinol + 2 NAD(+) + H2O = L-histidine + 2 NADH + 3 H(+). The protein operates within amino-acid biosynthesis; L-histidine biosynthesis; L-histidine from 5-phospho-alpha-D-ribose 1-diphosphate: step 9/9. Functionally, catalyzes the sequential NAD-dependent oxidations of L-histidinol to L-histidinaldehyde and then to L-histidine. In Ralstonia nicotianae (strain ATCC BAA-1114 / GMI1000) (Ralstonia solanacearum), this protein is Histidinol dehydrogenase.